Here is a 296-residue protein sequence, read N- to C-terminus: Lipoyl synthase (296 aa).

[4Fe-4S] cluster is bound by residues cysteine 35, cysteine 40, cysteine 46, cysteine 61, cysteine 65, cysteine 68, and serine 274. The region spanning 47-263 (WSSKHVTVMI…KEAAYARGFL (217 aa)) is the Radical SAM core domain.

It belongs to the radical SAM superfamily. Lipoyl synthase family. Requires [4Fe-4S] cluster as cofactor.

Its subcellular location is the cytoplasm. It carries out the reaction [[Fe-S] cluster scaffold protein carrying a second [4Fe-4S](2+) cluster] + N(6)-octanoyl-L-lysyl-[protein] + 2 oxidized [2Fe-2S]-[ferredoxin] + 2 S-adenosyl-L-methionine + 4 H(+) = [[Fe-S] cluster scaffold protein] + N(6)-[(R)-dihydrolipoyl]-L-lysyl-[protein] + 4 Fe(3+) + 2 hydrogen sulfide + 2 5'-deoxyadenosine + 2 L-methionine + 2 reduced [2Fe-2S]-[ferredoxin]. It participates in protein modification; protein lipoylation via endogenous pathway; protein N(6)-(lipoyl)lysine from octanoyl-[acyl-carrier-protein]: step 2/2. Its function is as follows. Catalyzes the radical-mediated insertion of two sulfur atoms into the C-6 and C-8 positions of the octanoyl moiety bound to the lipoyl domains of lipoate-dependent enzymes, thereby converting the octanoylated domains into lipoylated derivatives. This chain is Lipoyl synthase, found in Neorickettsia sennetsu (strain ATCC VR-367 / Miyayama) (Ehrlichia sennetsu).